A 185-amino-acid chain; its full sequence is Alcohol dehydrogenase 1 (185 aa).

Residues 10 to 15 (GLGGVG), D34, K39, 103 to 105 (VGV), and R180 contribute to the NAD(+) site.

It belongs to the zinc-containing alcohol dehydrogenase family. Class-I subfamily. As to quaternary structure, homodimer. It depends on Zn(2+) as a cofactor.

The protein resides in the cytoplasm. It carries out the reaction a primary alcohol + NAD(+) = an aldehyde + NADH + H(+). The enzyme catalyses a secondary alcohol + NAD(+) = a ketone + NADH + H(+). The protein is Alcohol dehydrogenase 1 (ADH1) of Anas platyrhynchos (Mallard).